The following is a 767-amino-acid chain: Protein transport protein Sec23B (767 aa).

An N-acetylalanine modification is found at alanine 2. Cysteine 61, cysteine 66, cysteine 85, and cysteine 88 together coordinate Zn(2+). N6-acetyllysine is present on lysine 564. Residues proline 634–leucine 720 form a Gelsolin-like repeat.

It belongs to the SEC23/SEC24 family. SEC23 subfamily. In terms of assembly, COPII is composed of at least five proteins: the Sec23/24 complex, the Sec13/31 complex and Sar1. Interacts with SAR1A. In terms of tissue distribution, ubiquitously expressed.

It is found in the cytoplasmic vesicle. The protein localises to the COPII-coated vesicle membrane. It localises to the endoplasmic reticulum membrane. Its subcellular location is the cytoplasm. The protein resides in the cytosol. In terms of biological role, component of the coat protein complex II (COPII) which promotes the formation of transport vesicles from the endoplasmic reticulum (ER). The coat has two main functions, the physical deformation of the endoplasmic reticulum membrane into vesicles and the selection of cargo molecules for their transport to the Golgi complex. This is Protein transport protein Sec23B from Homo sapiens (Human).